The following is a 95-amino-acid chain: Aspartyl/glutamyl-tRNA(Asn/Gln) amidotransferase subunit C (95 aa).

It belongs to the GatC family. Heterotrimer of A, B and C subunits.

The catalysed reaction is L-glutamyl-tRNA(Gln) + L-glutamine + ATP + H2O = L-glutaminyl-tRNA(Gln) + L-glutamate + ADP + phosphate + H(+). It carries out the reaction L-aspartyl-tRNA(Asn) + L-glutamine + ATP + H2O = L-asparaginyl-tRNA(Asn) + L-glutamate + ADP + phosphate + 2 H(+). Functionally, allows the formation of correctly charged Asn-tRNA(Asn) or Gln-tRNA(Gln) through the transamidation of misacylated Asp-tRNA(Asn) or Glu-tRNA(Gln) in organisms which lack either or both of asparaginyl-tRNA or glutaminyl-tRNA synthetases. The reaction takes place in the presence of glutamine and ATP through an activated phospho-Asp-tRNA(Asn) or phospho-Glu-tRNA(Gln). This Geotalea daltonii (strain DSM 22248 / JCM 15807 / FRC-32) (Geobacter daltonii) protein is Aspartyl/glutamyl-tRNA(Asn/Gln) amidotransferase subunit C.